Here is a 1922-residue protein sequence, read N- to C-terminus: Kinesin-related protein 4 (1922 aa).

The Kinesin motor domain occupies 22–343 (KIKVAIRVRP…LQFAKRAKRV (322 aa)). An ATP-binding site is contributed by 101–108 (GQTSSGKT). A disordered region spans residues 448–538 (QKIKKIKNSE…DDEFKDNLNL (91 aa)). The segment covering 456–468 (SENNISSSSSNSS) has biased composition (low complexity). 2 stretches are compositionally biased toward acidic residues: residues 469-480 (GEEDDDDKDDEN) and 488-532 (DKDD…DDEF). Residues 562–1712 (QVKVKREDLD…ELESTKQKNL (1151 aa)) are a coiled coil. A disordered region spans residues 1887–1922 (TSTDNLTTTSTSLKSKSSSNGENKENQNNNIIIKNN).

It belongs to the TRAFAC class myosin-kinesin ATPase superfamily. Kinesin family.

The protein resides in the cytoplasm. Its subcellular location is the cytoskeleton. Functionally, microtubule-associated force-producing protein that plays a role in organelle transport. Its motor activity is directed toward the microtubule's plus end. Cooperates with dynein in organizing spindle assembly during cell division. The polypeptide is Kinesin-related protein 4 (kif4) (Dictyostelium discoideum (Social amoeba)).